Consider the following 389-residue polypeptide: Cellobiose 2-epimerase (389 aa).

Belongs to the cellobiose 2-epimerase family.

It is found in the cytoplasm. The catalysed reaction is D-cellobiose = beta-D-glucosyl-(1-&gt;4)-D-mannopyranose. Enhanced by Mg(2+) and Ca(2+) ions, ethylenediaminetetraacetic acid, ethylene glycol tetraacetic acid and citrate. Inhibited by Al(3+), Fe(3+), Co(2+), Cu(2+), Zn(2+), Pb(2+) and Ag(+) ions, iodoacetate, 4-chloromercuribenzoate and N-bromosuccinimide. Its function is as follows. Catalyzes the reversible epimerization of cellobiose to 4-O-beta-D-glucopyranosyl-D-mannose (Glc-Man). Can also epimerize cellotriose to Glc-Glc-Man, cellotetraose to Glc-Glc-Glc-Man, and lactose to epilactose. The protein is Cellobiose 2-epimerase (ce-ne1) of Ruminococcus albus.